A 394-amino-acid polypeptide reads, in one-letter code: Phosphopentomutase (394 aa).

Mn(2+) is bound by residues Asp-13, Asp-286, His-291, Asp-327, His-328, and His-339.

The protein belongs to the phosphopentomutase family. Requires Mn(2+) as cofactor.

The protein localises to the cytoplasm. The enzyme catalyses 2-deoxy-alpha-D-ribose 1-phosphate = 2-deoxy-D-ribose 5-phosphate. It catalyses the reaction alpha-D-ribose 1-phosphate = D-ribose 5-phosphate. It participates in carbohydrate degradation; 2-deoxy-D-ribose 1-phosphate degradation; D-glyceraldehyde 3-phosphate and acetaldehyde from 2-deoxy-alpha-D-ribose 1-phosphate: step 1/2. Isomerase that catalyzes the conversion of deoxy-ribose 1-phosphate (dRib-1-P) and ribose 1-phosphate (Rib-1-P) to deoxy-ribose 5-phosphate (dRib-5-P) and ribose 5-phosphate (Rib-5-P), respectively. The chain is Phosphopentomutase from Bacillus cereus (strain ATCC 10987 / NRS 248).